Here is a 91-residue protein sequence, read N- to C-terminus: Putative regulatory protein PTH_1796 (91 aa).

This sequence belongs to the RemA family.

The protein is Putative regulatory protein PTH_1796 of Pelotomaculum thermopropionicum (strain DSM 13744 / JCM 10971 / SI).